A 283-amino-acid polypeptide reads, in one-letter code: MTKLITTVKEMQHIVKAAKRSGTTIGFIPTMGALHDGHLTMVRESVSTNDITVVSVFVNPLQFGPNEDFDAYPRQIDKDLELVSEVGADIVFHPAVEDMYPGELGIDVKVGPLADVLEGAKRPGHFDGVVTVVNKLFNIVMPDYAYFGKKDAQQLAIVEQMVKDFNHAVEIIGIDIVREADGLAKSSRNVYLTEQERQEAVHLSKSLLLAQALYQDGERQSKVIIDKVTQYLESHISGRIEEVAVYSYPQLVEQHEITGRIFISLAVKFSKARLIDNIIIGAE.

ATP is bound at residue 31 to 38 (MGALHDGH). His38 acts as the Proton donor in catalysis. (R)-pantoate is bound at residue Gln62. Residue Gln62 participates in beta-alanine binding. Residue 148–151 (GKKD) participates in ATP binding. Gln154 serves as a coordination point for (R)-pantoate. Residues Val177 and 185-188 (KSSR) each bind ATP.

The protein belongs to the pantothenate synthetase family. Homodimer.

It is found in the cytoplasm. It carries out the reaction (R)-pantoate + beta-alanine + ATP = (R)-pantothenate + AMP + diphosphate + H(+). It functions in the pathway cofactor biosynthesis; (R)-pantothenate biosynthesis; (R)-pantothenate from (R)-pantoate and beta-alanine: step 1/1. Functionally, catalyzes the condensation of pantoate with beta-alanine in an ATP-dependent reaction via a pantoyl-adenylate intermediate. This is Pantothenate synthetase from Staphylococcus aureus (strain MRSA252).